Consider the following 187-residue polypeptide: Protein dj-1beta (187 aa).

The residue at position 45 (Cys-45) is a Cysteine sulfinic acid (-SO2H). Cys-104 serves as the catalytic Nucleophile. Residue Cys-104 is modified to Cysteine sulfinic acid (-SO2H); alternate.

Post-translationally, oxidation of Cys-45 and Cys-104 in response to oxidative stress. Levels of oxidation increase with age. In terms of tissue distribution, expressed in the head and testis (at protein level). Ubiquitously expressed at constant levels.

It is found in the mitochondrion. Its subcellular location is the cytoplasm. The protein resides in the nucleus. Plays an important role in cell protection against oxidative stress and cell death by acting as a oxidative stress sensor. Does not play a role in methylglyoxal detoxification. Plays a role in mitochondrial function together with Pink1. In motor neurons regulates structural synaptic plasticity of locomotor behavior as part of the PTEN-phosphatidylinositol 3-kinase pathway in response to oxygen species (ROS) levels. The protein is Protein dj-1beta of Drosophila melanogaster (Fruit fly).